The sequence spans 510 residues: ATP synthase subunit alpha (510 aa).

169-176 (GDRQTGKT) is an ATP binding site.

It belongs to the ATPase alpha/beta chains family. F-type ATPases have 2 components, CF(1) - the catalytic core - and CF(0) - the membrane proton channel. CF(1) has five subunits: alpha(3), beta(3), gamma(1), delta(1), epsilon(1). CF(0) has three main subunits: a(1), b(2) and c(9-12). The alpha and beta chains form an alternating ring which encloses part of the gamma chain. CF(1) is attached to CF(0) by a central stalk formed by the gamma and epsilon chains, while a peripheral stalk is formed by the delta and b chains.

Its subcellular location is the cell inner membrane. It catalyses the reaction ATP + H2O + 4 H(+)(in) = ADP + phosphate + 5 H(+)(out). Functionally, produces ATP from ADP in the presence of a proton gradient across the membrane. The alpha chain is a regulatory subunit. The protein is ATP synthase subunit alpha of Anaeromyxobacter sp. (strain K).